A 71-amino-acid polypeptide reads, in one-letter code: MPSVKVRENEPFEFALRRFKRICEKAGILAETRKREFYEKPTQERKRKAAAAVKRQMRRTSRDVTKRKRLY.

The tract at residues glutamate 39 to tyrosine 71 is disordered. A compositionally biased stretch (basic residues) spans arginine 45 to tyrosine 71.

The protein belongs to the bacterial ribosomal protein bS21 family.

This is Small ribosomal subunit protein bS21 from Xylella fastidiosa (strain M12).